Here is an 876-residue protein sequence, read N- to C-terminus: Valine--tRNA ligase (876 aa).

The 'HIGH' region motif lies at 44–54; that stretch reads PNVTGKLHLGH. The 'KMSKS' region signature appears at 520-524; that stretch reads KMSKS. Lysine 523 is an ATP binding site. Positions 805–876 form a coiled coil; that stretch reads LEGLIDMDKE…VKARIEQLKA (72 aa).

It belongs to the class-I aminoacyl-tRNA synthetase family. ValS type 1 subfamily. Monomer.

It is found in the cytoplasm. It catalyses the reaction tRNA(Val) + L-valine + ATP = L-valyl-tRNA(Val) + AMP + diphosphate. Functionally, catalyzes the attachment of valine to tRNA(Val). As ValRS can inadvertently accommodate and process structurally similar amino acids such as threonine, to avoid such errors, it has a 'posttransfer' editing activity that hydrolyzes mischarged Thr-tRNA(Val) in a tRNA-dependent manner. The sequence is that of Valine--tRNA ligase from Staphylococcus carnosus (strain TM300).